The primary structure comprises 260 residues: Zinc import ATP-binding protein ZnuC (260 aa).

The ABC transporter domain maps to 14–229 (LTARNLCADR…PEFARLFGDQ (216 aa)). ATP is bound at residue 46–53 (GPNGAGKS).

This sequence belongs to the ABC transporter superfamily. Zinc importer (TC 3.A.1.15.5) family. In terms of assembly, the complex is composed of two ATP-binding proteins (ZnuC), two transmembrane proteins (ZnuB) and a solute-binding protein (ZnuA).

It is found in the cell inner membrane. The catalysed reaction is Zn(2+)(out) + ATP(in) + H2O(in) = Zn(2+)(in) + ADP(in) + phosphate(in) + H(+)(in). Part of the ABC transporter complex ZnuABC involved in zinc import. Responsible for energy coupling to the transport system. This is Zinc import ATP-binding protein ZnuC from Magnetococcus marinus (strain ATCC BAA-1437 / JCM 17883 / MC-1).